Here is a 327-residue protein sequence, read N- to C-terminus: MKAPVRVTVTGAAGQISYSLLFRIAAGEMLGADQPVILQMLEITPALEALKGVAMELDDCAFPLLHSMVCTDDANVAFKDSDYALLVGARPRGPGMERNDLLEANAAIFSVQGKAINDHASRGIKVLVVGNPANTNALIAQRNAPDIDPRQFTAMTRLDHNRGMSQLASKLDVSINDITKMTIWGNHSSTQYPDLYHALVKGDAAIDKVDSTWYAEEYIPTVQQRGAAIIKARGASSAASAANAAIFHMRDWALGSPEGDWVSMGVYSDGSYGIEKGLIYSFPCVCKNGDWEIVQGLSIDEFSQARMTATETELQGERDAVKALLPA.

11–17 is an NAD(+) binding site; the sequence is GAAGQIS. Residues R92 and R98 each coordinate substrate. Residues N105, Q112, and 129-131 each bind NAD(+); that span reads VGN. Residues N131 and R162 each contribute to the substrate site. H187 functions as the Proton acceptor in the catalytic mechanism.

The protein belongs to the LDH/MDH superfamily. MDH type 2 family.

It carries out the reaction (S)-malate + NAD(+) = oxaloacetate + NADH + H(+). Catalyzes the reversible oxidation of malate to oxaloacetate. In Teredinibacter turnerae (strain ATCC 39867 / T7901), this protein is Malate dehydrogenase.